The sequence spans 464 residues: Phosphoenolpyruvate carboxylase (464 aa).

This sequence belongs to the PEPCase type 2 family. As to quaternary structure, homotetramer. It depends on Mg(2+) as a cofactor.

The enzyme catalyses oxaloacetate + phosphate = phosphoenolpyruvate + hydrogencarbonate. Its function is as follows. Catalyzes the irreversible beta-carboxylation of phosphoenolpyruvate (PEP) to form oxaloacetate (OAA), a four-carbon dicarboxylic acid source for the tricarboxylic acid cycle. This chain is Phosphoenolpyruvate carboxylase, found in Thermofilum pendens (strain DSM 2475 / Hrk 5).